The chain runs to 44 residues: Thymosin beta-4 (44 aa).

Composition is skewed to basic and acidic residues over residues 1–25 and 33–44; these read MSDK…ETQE and ETIEQEKQTSES. The interval 1-44 is disordered; it reads MSDKPDMAEIEKFDKAKLKKTETQEKNPLPSKETIEQEKQTSES. N-acetylserine is present on Ser2.

The protein belongs to the thymosin beta family. As to expression, spleen, kidney, heart, and oocytes.

The protein localises to the cytoplasm. It is found in the cytoskeleton. Functionally, plays an important role in the organization of the cytoskeleton. Binds to and sequesters actin monomers (G actin) and therefore inhibits actin polymerization. The polypeptide is Thymosin beta-4 (tmsb4) (Xenopus laevis (African clawed frog)).